The sequence spans 184 residues: ATP synthase subunit b, chloroplastic (184 aa).

A helical transmembrane segment spans residues 31–49 (IINPSVVLSVLIYFGKGVL).

Belongs to the ATPase B chain family. In terms of assembly, F-type ATPases have 2 components, F(1) - the catalytic core - and F(0) - the membrane proton channel. F(1) has five subunits: alpha(3), beta(3), gamma(1), delta(1), epsilon(1). F(0) has four main subunits: a(1), b(1), b'(1) and c(10-14). The alpha and beta chains form an alternating ring which encloses part of the gamma chain. F(1) is attached to F(0) by a central stalk formed by the gamma and epsilon chains, while a peripheral stalk is formed by the delta, b and b' chains.

It is found in the plastid. It localises to the chloroplast thylakoid membrane. F(1)F(0) ATP synthase produces ATP from ADP in the presence of a proton or sodium gradient. F-type ATPases consist of two structural domains, F(1) containing the extramembraneous catalytic core and F(0) containing the membrane proton channel, linked together by a central stalk and a peripheral stalk. During catalysis, ATP synthesis in the catalytic domain of F(1) is coupled via a rotary mechanism of the central stalk subunits to proton translocation. In terms of biological role, component of the F(0) channel, it forms part of the peripheral stalk, linking F(1) to F(0). This is ATP synthase subunit b, chloroplastic from Pinus koraiensis (Korean pine).